The chain runs to 521 residues: Importin subunit alpha-4 (521 aa).

The interval 1-29 (MAENPSLENHRIKSFKNKGRDVETMRRHR) is disordered. At alanine 2 the chain carries N-acetylalanine. The IBB domain occupies 2–58 (AENPSLENHRIKSFKNKGRDVETMRRHRNEVTVELRKNKRDEHLLKKRNVPQEESLE). A compositionally biased stretch (basic and acidic residues) spans 18–29 (KGRDVETMRRHR). The Nuclear localization signal motif lies at 43 to 52 (EHLLKKRNVP). Residues serine 56 and serine 60 each carry the phosphoserine modification. An ARM 1; truncated repeat occupies 66-106 (FKAQNVTLEAILQNATSDNPVVQLSAVQAARKLLSSDRNPP). ARM repeat units lie at residues 107 to 149 (IDDL…TSAQ), 150 to 194 (TQAV…CRDY), 195 to 233 (VISL…NKDP), 234 to 278 (PPPM…EQIQ), 279 to 318 (MVID…TDEQ), 319 to 360 (TQVV…NQQQ), 361 to 400 (VQAV…ISGR), and 401 to 443 (KDQV…IMAG). Positions 137-229 (WALTNIASGT…VTWVIVNLCR (93 aa)) are NLS binding site (major). The segment at 306 to 394 (RAVGNIVTGT…QKEAAWAISN (89 aa)) is NLS binding site (minor). One copy of the ARM 10; atypical repeat lies at 447 to 485 (STIAEIIEECGGLEKIEVLQQHENEDIYKLAFEIIDQYF). Tyrosine 484 is modified (phosphotyrosine).

It belongs to the importin alpha family. In terms of assembly, forms a complex with importin subunit beta-1. Interacts with DDX21. Interacts with NCBP1, NCBP2/CBP20 and NCBP3. Interacts with RCC1. Interacts with ZC3H11A. As to quaternary structure, (Microbial infection) Interacts with HIV-1 integrase; this interaction might play a role in nuclear import of HIV pre-integration complex. (Microbial infection) Interacts with influenza virus nucleoprotein; this interaction might play a role in nuclear import of viral genome. In terms of tissue distribution, ubiquitous. Highest levels in heart and skeletal muscle.

It localises to the cytoplasm. Its subcellular location is the nucleus. Functions in nuclear protein import as an adapter protein for nuclear receptor KPNB1. Binds specifically and directly to substrates containing either a simple or bipartite NLS motif. Docking of the importin/substrate complex to the nuclear pore complex (NPC) is mediated by KPNB1 through binding to nucleoporin FxFG repeats and the complex is subsequently translocated through the pore by an energy requiring, Ran-dependent mechanism. At the nucleoplasmic side of the NPC, Ran binds to importin-beta and the three components separate and importin-alpha and -beta are re-exported from the nucleus to the cytoplasm where GTP hydrolysis releases Ran from importin. The directionality of nuclear import is thought to be conferred by an asymmetric distribution of the GTP- and GDP-bound forms of Ran between the cytoplasm and nucleus. In vitro, mediates the nuclear import of human cytomegalovirus UL84 by recognizing a non-classical NLS. Recognizes NLSs of influenza A virus nucleoprotein probably through ARM repeats 7-9. The polypeptide is Importin subunit alpha-4 (KPNA3) (Homo sapiens (Human)).